The sequence spans 441 residues: Histidinol dehydrogenase (441 aa).

3 residues coordinate NAD(+): Tyr-136, Gln-197, and Asn-220. 3 residues coordinate substrate: Ser-243, Gln-265, and His-268. Residues Gln-265 and His-268 each coordinate Zn(2+). Catalysis depends on proton acceptor residues Glu-333 and His-334. Residues His-334, Asp-367, Glu-421, and His-426 each coordinate substrate. Asp-367 lines the Zn(2+) pocket. His-426 provides a ligand contact to Zn(2+).

This sequence belongs to the histidinol dehydrogenase family. It depends on Zn(2+) as a cofactor.

The enzyme catalyses L-histidinol + 2 NAD(+) + H2O = L-histidine + 2 NADH + 3 H(+). It participates in amino-acid biosynthesis; L-histidine biosynthesis; L-histidine from 5-phospho-alpha-D-ribose 1-diphosphate: step 9/9. In terms of biological role, catalyzes the sequential NAD-dependent oxidations of L-histidinol to L-histidinaldehyde and then to L-histidine. This is Histidinol dehydrogenase from Pseudomonas fluorescens (strain Pf0-1).